Here is a 366-residue protein sequence, read N- to C-terminus: MMQRVIIHVDMDYFYAAIEEREKPELLGKAVVVCMLSGRSELSGSVSTCNYIAREFGIRSGMPCSRAKKLNPEAVFLPVRKEFYTSVSDRIMEILRSYADPGENGDSFEQISVDEAFLEITYRAGGDFNLAFELGMQIKKEIKEKENLTCSIGIGPNKLIAKMASSAKKPDGITVVSPENQEAFLWPLKVSKLWGIGDVTAKKLQEMDIVTVKDLAEHDVIELISTFGKSRGTWLKQAASGIDDSPLKEREGSEQIGRIATLPEDTLDQELILSLLEKLAGDVIEKLDSRELSFRVVTVTVINSNFRTYTKSRTLNHPVSSKETLLEAAREILSEFLSESKTEFRRVGVRVGGLQKKKGQTSLFDY.

The UmuC domain maps to 6-197 (IIHVDMDYFY…LKVSKLWGIG (192 aa)). 2 residues coordinate Mg(2+): D10 and D114. The active site involves E115.

It belongs to the DNA polymerase type-Y family. As to quaternary structure, monomer. It depends on Mg(2+) as a cofactor.

The protein localises to the cytoplasm. The enzyme catalyses DNA(n) + a 2'-deoxyribonucleoside 5'-triphosphate = DNA(n+1) + diphosphate. In terms of biological role, poorly processive, error-prone DNA polymerase involved in untargeted mutagenesis. Copies undamaged DNA at stalled replication forks, which arise in vivo from mismatched or misaligned primer ends. These misaligned primers can be extended by PolIV. Exhibits no 3'-5' exonuclease (proofreading) activity. May be involved in translesional synthesis. The sequence is that of DNA polymerase IV from Methanosarcina acetivorans (strain ATCC 35395 / DSM 2834 / JCM 12185 / C2A).